The sequence spans 663 residues: Alpha-amylase MalA (663 aa).

Disordered regions lie at residues 1–28 (MHHP…PTAT) and 80–135 (GTLE…LTLR). Gly residues predominate over residues 92 to 111 (RSGGHSGGVSGGRSGPGRSG). Asp411 acts as the Nucleophile in catalysis. The active-site Proton donor is Glu440.

Belongs to the glycosyl hydrolase 13 family.

The protein resides in the cytoplasm. The enzyme catalyses Endohydrolysis of (1-&gt;4)-alpha-D-glucosidic linkages in polysaccharides containing three or more (1-&gt;4)-alpha-linked D-glucose units.. The protein operates within glycan degradation; starch degradation. Stable and active over a broad range of NaCl concentrations (0.5 to 4.2 M NaCl), with maximal activity at 2.6 M NaCl. 83% and 94% of the maximum activity at 0.6 and 4.2 M NaCl, respectively. Active and stable also in KCl. In terms of biological role, alpha-amylase that cleaves starch into oligosaccharides, the first step in starch degradation. Endo-acting enzyme which prefers a linear polysaccharide to branched polysaccharides hydrolyzing alpha-1,4 glucosidic bonds efficiently. Also has transglycosylation activity, but does not act on alpha-1,6 bonds. Higher activities of 100%, 79% and 67.8% against amylose, soluble starch and amylopectin, respectively. Lower activity of 22% against glycogen and faint or no activity against alpha-, beta- and gamma-cyclodextrin. In Haloarcula japonica (strain ATCC 49778 / DSM 6131 / JCM 7785 / NBRC 101032 / NCIMB 13157 / TR-1), this protein is Alpha-amylase MalA.